Reading from the N-terminus, the 131-residue chain is Large ribosomal subunit protein bL12 (131 aa).

The protein belongs to the bacterial ribosomal protein bL12 family. Homodimer. Part of the ribosomal stalk of the 50S ribosomal subunit. Forms a multimeric L10(L12)X complex, where L10 forms an elongated spine to which 2 to 4 L12 dimers bind in a sequential fashion. Binds GTP-bound translation factors.

Its function is as follows. Forms part of the ribosomal stalk which helps the ribosome interact with GTP-bound translation factors. Is thus essential for accurate translation. This chain is Large ribosomal subunit protein bL12, found in Prochlorococcus marinus (strain MIT 9313).